A 401-amino-acid chain; its full sequence is Nuclear rim protein 1 (401 aa).

A run of 2 helical transmembrane segments spans residues 146–166 and 256–274; these read LLLF…WTFI and FLTS…FLIL.

The protein belongs to the NUR1 family.

The protein resides in the nucleus membrane. Functionally, member of a perinuclear network that controls recombination at multiple loci to maintain genome stability. Required for rDNA repeat stability. The protein is Nuclear rim protein 1 (NUR1) of Vanderwaltozyma polyspora (strain ATCC 22028 / DSM 70294 / BCRC 21397 / CBS 2163 / NBRC 10782 / NRRL Y-8283 / UCD 57-17) (Kluyveromyces polysporus).